The chain runs to 198 residues: Holliday junction resolvase RecU (198 aa).

The interval 1-22 (MVNYPHKVSSQKRQTSLSQPKN) is disordered. Residues 11-22 (QKRQTSLSQPKN) show a composition bias toward polar residues. 4 residues coordinate Mg(2+): threonine 81, aspartate 83, glutamate 96, and glutamine 115.

It belongs to the RecU family. Mg(2+) is required as a cofactor.

It is found in the cytoplasm. It carries out the reaction Endonucleolytic cleavage at a junction such as a reciprocal single-stranded crossover between two homologous DNA duplexes (Holliday junction).. Its function is as follows. Endonuclease that resolves Holliday junction intermediates in genetic recombination. Cleaves mobile four-strand junctions by introducing symmetrical nicks in paired strands. Promotes annealing of linear ssDNA with homologous dsDNA. Required for DNA repair, homologous recombination and chromosome segregation. This chain is Holliday junction resolvase RecU, found in Streptococcus pneumoniae (strain P1031).